The primary structure comprises 204 residues: MGASKYMQELWRKKQSDVMRFLLRVRCWQYRQLSALHRAPRPTRPDKARRLGYKAKQGYVIYRVRVRRGGRKRPVPKGATYGKPVHHGVNQLKFARSLQSIAEERAGRHCGGLRVLNSYWVGEDSTYKFFEVILIDTFHKAIRRNPDMQWITKAVHKHREMRGLTSAGKKSRGLGKGHKFHLTIGGSRRAAWRRRNTLQLHRYR.

The protein belongs to the eukaryotic ribosomal protein eL15 family. As to quaternary structure, component of the large ribosomal subunit.

The protein localises to the cytoplasm. Component of the large ribosomal subunit. The ribosome is a large ribonucleoprotein complex responsible for the synthesis of proteins in the cell. This chain is Large ribosomal subunit protein eL15 (rpl15), found in Silurus meridionalis (Southern catfish).